The sequence spans 178 residues: MAGHSDNDLGLPSFDKPVKVAIVIAPYYTSISEAQLAAARGVLDAADVAHETIEVPGSLEVPTAIGIAHRMSNFDGFVALGCVIRGATSHYDVVVNESSRALTMLGLQGICIGNGIITVETRDQAEERADGGRLNTAGGAAEAALHLIALTRSYGAPKGALGFKPRGTIEIADGSSQA.

5-amino-6-(D-ribitylamino)uracil contacts are provided by residues tyrosine 27, 58–60 (SLE), and 82–84 (CVI). A (2S)-2-hydroxy-3-oxobutyl phosphate-binding site is contributed by 87–88 (AT). Catalysis depends on histidine 90, which acts as the Proton donor. Position 114 (asparagine 114) interacts with 5-amino-6-(D-ribitylamino)uracil. A (2S)-2-hydroxy-3-oxobutyl phosphate-binding site is contributed by arginine 128.

The protein belongs to the DMRL synthase family.

The catalysed reaction is (2S)-2-hydroxy-3-oxobutyl phosphate + 5-amino-6-(D-ribitylamino)uracil = 6,7-dimethyl-8-(1-D-ribityl)lumazine + phosphate + 2 H2O + H(+). The protein operates within cofactor biosynthesis; riboflavin biosynthesis; riboflavin from 2-hydroxy-3-oxobutyl phosphate and 5-amino-6-(D-ribitylamino)uracil: step 1/2. Catalyzes the formation of 6,7-dimethyl-8-ribityllumazine by condensation of 5-amino-6-(D-ribitylamino)uracil with 3,4-dihydroxy-2-butanone 4-phosphate. This is the penultimate step in the biosynthesis of riboflavin. This Jannaschia sp. (strain CCS1) protein is 6,7-dimethyl-8-ribityllumazine synthase.